We begin with the raw amino-acid sequence, 325 residues long: Golgi to ER traffic protein 4 homolog B (325 aa).

Disordered regions lie at residues 1 to 22 (MAAA…GGVQ) and 306 to 325 (SGED…IELD). A compositionally biased stretch (acidic residues) spans 307–317 (GEDDDVEDGQE).

This sequence belongs to the GET4 family. In terms of assembly, component of the bag6/bat3 complex.

The protein localises to the cytoplasm. It localises to the cytosol. Functionally, as part of a cytosolic protein quality control complex, the bag6/bat3 complex, maintains misfolded and hydrophobic patches-containing proteins in a soluble state and participates in their proper delivery to the endoplasmic reticulum or alternatively can promote their sorting to the proteasome where they undergo degradation. The bag6/bat3 complex is involved in the post-translational delivery of tail-anchored/type II transmembrane proteins to the endoplasmic reticulum membrane. Similarly, the bag6/bat3 complex also functions as a sorting platform for proteins of the secretory pathway that are mislocalized to the cytosol either delivering them to the proteasome for degradation or to the endoplasmic reticulum. The bag6/bat3 complex also plays a role in the endoplasmic reticulum-associated degradation (ERAD), a quality control mechanism that eliminates unwanted proteins of the endoplasmic reticulum through their retrotranslocation to the cytosol and their targeting to the proteasome. It maintains these retrotranslocated proteins in an unfolded yet soluble state condition in the cytosol to ensure their proper delivery to the proteasome. The protein is Golgi to ER traffic protein 4 homolog B (get4-b) of Xenopus laevis (African clawed frog).